Here is a 60-residue protein sequence, read N- to C-terminus: Venom protein 4.1 (60 aa).

The signal sequence occupies residues 1 to 26 (MKALCAILLVLFACSVMFEHFSISTA).

It belongs to the non-disulfide-bridged peptide (NDBP) superfamily. In terms of tissue distribution, expressed by the venom gland.

The protein localises to the secreted. This chain is Venom protein 4.1, found in Lychas mucronatus (Chinese swimming scorpion).